A 305-amino-acid polypeptide reads, in one-letter code: Undecaprenyl-diphosphatase (305 aa).

A run of 8 helical transmembrane segments spans residues 18–38 (GVTE…PALV), 55–75 (YLAF…VFFW), 103–123 (WLIV…EQLF), 130–150 (PVPA…GEVL), 187–207 (GVLI…RSGI), 225–245 (FSFL…IPEL), 246–266 (FGPL…ASFV), and 284–304 (LTPF…WLAL).

The protein belongs to the UppP family.

It localises to the cell membrane. It carries out the reaction di-trans,octa-cis-undecaprenyl diphosphate + H2O = di-trans,octa-cis-undecaprenyl phosphate + phosphate + H(+). In terms of biological role, catalyzes the dephosphorylation of undecaprenyl diphosphate (UPP). Confers resistance to bacitracin. This Mycobacterium avium (strain 104) protein is Undecaprenyl-diphosphatase.